The chain runs to 283 residues: GTP cyclohydrolase MptA (283 aa).

This sequence belongs to the GTP cyclohydrolase IV family. As to quaternary structure, homodimer. Fe(2+) serves as cofactor.

The catalysed reaction is GTP + H2O = 7,8-dihydroneopterin 2',3'-cyclic phosphate + formate + diphosphate + H(+). The protein operates within cofactor biosynthesis; 5,6,7,8-tetrahydromethanopterin biosynthesis. Converts GTP to 7,8-dihydro-D-neopterin 2',3'-cyclic phosphate, the first intermediate in the biosynthesis of coenzyme methanopterin. The chain is GTP cyclohydrolase MptA from Aeropyrum pernix (strain ATCC 700893 / DSM 11879 / JCM 9820 / NBRC 100138 / K1).